Consider the following 1066-residue polypeptide: Cytoplasmic dynein 2 intermediate chain 1 (1066 aa).

Disordered regions lie at residues 22–366 (LWAI…ENAR) and 381–408 (YEDD…LEEL). Residue Ser-30 is modified to Phosphoserine. Composition is skewed to basic and acidic residues over residues 30–135 (SKEE…EELR), 147–171 (ETRD…RSEE), 180–256 (DEDR…EERH), 264–308 (GFHF…KRDG), and 316–336 (NLVR…HEEG). Residue Ser-247 is modified to Phosphoserine. Composition is skewed to acidic residues over residues 351–362 (ETVEIEKEETDL) and 381–397 (YEDD…ESSN). The span at 399 to 408 (PESREKLEEL) shows a compositional bias: basic and acidic residues. Residues 473–552 (ASHRQKSRTQ…DIQTEEIETR (80 aa)) form a binding to the DYNLT2B-DYNLT1/DYNLT3 dimer region. 4 WD repeats span residues 694–734 (ICES…RLHY), 775–821 (VHKK…KADI), 907–947 (IRPV…PLLQ), and 952–992 (TDSH…LGPV).

Belongs to the dynein light intermediate chain family. Intermediate chain of the cytoplasmic dynein complex 2, a multisubunit complex, composed at least of eleven different proteins. The cytoplasmic dynein 2 complex consists of two catalytic heavy chains (HCs) and a number of non-catalytic subunits presented by intermediate chains (ICs), light intermediate chains (LICs) and light chains (LCs). Among them, a heavy chain (DYNC2H1), two intermediate chains (DYNC2I2 and DYNC2I1), a light intermediate chain (DYNC2LI1), and a light chain (DYNLT2B) are unique to the cytoplasmic dynein complex 2, but a subset of the light chains are also shared by dynein-1 and dynein-2 complexes. Interacts with DYNC2I2; their C-terminal domains each bind a copy of the heavy chain, and their extended N-terminal regions are held together by an array of light chain dimers. Interacts with DYNLT2B. Interacts (via the N-terminal half) with DYNLT2B-DYNLT1 dimer or with DYNLT2B-DYNLT3 dimer; this interaction is crucial for retrograde trafficking of ciliary proteins. As to expression, expressed in chondrocytes (at protein level).

Its subcellular location is the cell projection. It is found in the cilium. The protein resides in the cytoplasm. The protein localises to the cytoskeleton. It localises to the microtubule organizing center. Its subcellular location is the centrosome. In terms of biological role, acts as one of several non-catalytic accessory components of the cytoplasmic dynein 2 complex (dynein-2 complex), a motor protein complex that drives the movement of cargos along microtubules within cilia and flagella in concert with the intraflagellar transport (IFT) system. DYNC2I1 plays a major role in retrograde ciliary protein trafficking in cilia and flagella. Also requires to maintain a functional transition zone. The protein is Cytoplasmic dynein 2 intermediate chain 1 of Homo sapiens (Human).